The chain runs to 206 residues: 2-phospho-L-lactate guanylyltransferase (206 aa).

Belongs to the CofC family. Homodimer.

It catalyses the reaction (2S)-2-phospholactate + GTP + H(+) = (2S)-lactyl-2-diphospho-5'-guanosine + diphosphate. It participates in cofactor biosynthesis; coenzyme F420 biosynthesis. In terms of biological role, guanylyltransferase that catalyzes the activation of (2S)-2-phospholactate (2-PL) as (2S)-lactyl-2-diphospho-5'-guanosine, via the condensation of 2-PL with GTP. It is involved in the biosynthesis of coenzyme F420, a hydride carrier cofactor. This is 2-phospho-L-lactate guanylyltransferase from Haloferax volcanii (strain ATCC 29605 / DSM 3757 / JCM 8879 / NBRC 14742 / NCIMB 2012 / VKM B-1768 / DS2) (Halobacterium volcanii).